A 113-amino-acid chain; its full sequence is Large ribosomal subunit protein P1 (113 aa).

The tract at residues 84–113 is disordered; sequence APAAAAKKETKKEEVKKEESDDDMGMGLFD. Over residues 89–102 the composition is skewed to basic and acidic residues; sequence AKKETKKEEVKKEE.

Belongs to the eukaryotic ribosomal protein P1/P2 family. P1 and P2 exist as dimers at the large ribosomal subunit.

Functionally, plays an important role in the elongation step of protein synthesis. The protein is Large ribosomal subunit protein P1 (rplp1) of Dictyostelium discoideum (Social amoeba).